A 729-amino-acid chain; its full sequence is 1,4-alpha-glucan branching enzyme GlgB (729 aa).

Asp-407 (nucleophile) is an active-site residue. The Proton donor role is filled by Glu-460.

It belongs to the glycosyl hydrolase 13 family. GlgB subfamily. In terms of assembly, monomer.

It catalyses the reaction Transfers a segment of a (1-&gt;4)-alpha-D-glucan chain to a primary hydroxy group in a similar glucan chain.. The protein operates within glycan biosynthesis; glycogen biosynthesis. Functionally, catalyzes the formation of the alpha-1,6-glucosidic linkages in glycogen by scission of a 1,4-alpha-linked oligosaccharide from growing alpha-1,4-glucan chains and the subsequent attachment of the oligosaccharide to the alpha-1,6 position. In Pseudoalteromonas atlantica (strain T6c / ATCC BAA-1087), this protein is 1,4-alpha-glucan branching enzyme GlgB.